A 139-amino-acid chain; its full sequence is S-adenosyl-L-methionine-binding protein AF_0241 (139 aa).

The 131-residue stretch at 3 to 133 (LKPIGVVKSP…YSPEIDCVNQ (131 aa)) folds into the TsaA-like domain. S-adenosyl-L-methionine-binding positions include Gln-16, 20-22 (PRQ), 58-59 (DK), Arg-82, Leu-92, and 113-116 (LDGS).

Belongs to the tRNA methyltransferase O family. As to quaternary structure, homodimer.

This is S-adenosyl-L-methionine-binding protein AF_0241 from Archaeoglobus fulgidus (strain ATCC 49558 / DSM 4304 / JCM 9628 / NBRC 100126 / VC-16).